The sequence spans 37 residues: Large ribosomal subunit protein bL36 (37 aa).

The protein belongs to the bacterial ribosomal protein bL36 family.

The polypeptide is Large ribosomal subunit protein bL36 (Maridesulfovibrio salexigens (strain ATCC 14822 / DSM 2638 / NCIMB 8403 / VKM B-1763) (Desulfovibrio salexigens)).